The sequence spans 224 residues: Large ribosomal subunit protein uL4 (224 aa).

Positions Asn-54–Asn-73 are disordered.

This sequence belongs to the universal ribosomal protein uL4 family. Part of the 50S ribosomal subunit.

Functionally, one of the primary rRNA binding proteins, this protein initially binds near the 5'-end of the 23S rRNA. It is important during the early stages of 50S assembly. It makes multiple contacts with different domains of the 23S rRNA in the assembled 50S subunit and ribosome. Its function is as follows. Forms part of the polypeptide exit tunnel. This is Large ribosomal subunit protein uL4 from Chlamydia felis (strain Fe/C-56) (Chlamydophila felis).